We begin with the raw amino-acid sequence, 506 residues long: NADH-quinone oxidoreductase subunit N (506 aa).

A run of 14 helical transmembrane segments spans residues 14-34, 40-60, 72-92, 109-129, 131-151, 166-186, 209-229, 256-276, 286-306, 314-334, 343-363, 385-405, 420-440, and 465-485; these read MVPE…DLFF, YVAL…ITLY, FVLD…AALI, GEYY…ASSV, FVTL…LVGI, VING…LYGI, LLLA…IATV, MAGF…VSVQ, MSIY…VVAL, LFAY…VALS, FYML…HGLI, AIVM…AGFI, AHYV…VYYF, and IVMS…MIGY.

Belongs to the complex I subunit 2 family. In terms of assembly, NDH-1 is composed of 14 different subunits. Subunits NuoA, H, J, K, L, M, N constitute the membrane sector of the complex.

Its subcellular location is the cell membrane. The catalysed reaction is a quinone + NADH + 5 H(+)(in) = a quinol + NAD(+) + 4 H(+)(out). Its function is as follows. NDH-1 shuttles electrons from NADH, via FMN and iron-sulfur (Fe-S) centers, to quinones in the respiratory chain. The immediate electron acceptor for the enzyme in this species is believed to be a menaquinone. Couples the redox reaction to proton translocation (for every two electrons transferred, four hydrogen ions are translocated across the cytoplasmic membrane), and thus conserves the redox energy in a proton gradient. The polypeptide is NADH-quinone oxidoreductase subunit N (Bacillus anthracis).